Here is a 125-residue protein sequence, read N- to C-terminus: MAVCIIDHDNIRGVIYFEPVHGKDKVLGSVIGLKSGTYSLIIHRYGDISRGCDSIGSPEIFIGNIFVNRYGVAYVYLDTDVNISTIIGKALSISKNDQRLACGVIGISYINEKIIHFLTINENGV.

A disulfide bridge links Cys-52 with Cys-102.

It belongs to the Cu-Zn superoxide dismutase family.

It is found in the host cytoplasm. In terms of biological role, virion protein with no enzymatic activity. The sequence is that of Cu-Zn superoxide dismutase-like protein from Bos taurus (Bovine).